The sequence spans 470 residues: Probable glycosyltransferase At3g07620 (470 aa).

At 1 to 7 the chain is on the cytoplasmic side; that stretch reads MRDYIPK. The helical; Signal-anchor transmembrane segment at 8–28 threads the bilayer; it reads YLNAFLLAFATFAVGFAIFIA. The Lumenal segment spans residues 29–470; that stretch reads KDSNSSSHLY…WLRRLNVKLL (442 aa). Residues Asn32, Asn73, Asn105, Asn236, Asn274, and Asn299 are each glycosylated (N-linked (GlcNAc...) asparagine).

Belongs to the glycosyltransferase 47 family.

Its subcellular location is the golgi apparatus membrane. In terms of biological role, may be involved in cell wall biosynthesis. The sequence is that of Probable glycosyltransferase At3g07620 from Arabidopsis thaliana (Mouse-ear cress).